The chain runs to 1291 residues: Cytoplasmic FMR1-interacting protein (1291 aa).

The interval His1269–Asn1291 is disordered. Polar residues predominate over residues Ser1271–Asn1291.

Belongs to the CYFIP family. In terms of assembly, interacts with Fmr1 and Rac1. Component of the WAVE complex composed of Hem/Kette, Scar/Wave and Cyfip where it binds through its C-terminus directly to Hem.

It localises to the cytoplasm. In terms of biological role, plays a role in guidance and morphology of central and peripheral axons and in synaptic morphology. Also required for formation of cell membrane protrusions and for bristle development. This is Cytoplasmic FMR1-interacting protein from Drosophila pseudoobscura pseudoobscura (Fruit fly).